Consider the following 89-residue polypeptide: Small ribosomal subunit protein uS15 (89 aa).

Belongs to the universal ribosomal protein uS15 family. As to quaternary structure, part of the 30S ribosomal subunit. Forms a bridge to the 50S subunit in the 70S ribosome, contacting the 23S rRNA.

Functionally, one of the primary rRNA binding proteins, it binds directly to 16S rRNA where it helps nucleate assembly of the platform of the 30S subunit by binding and bridging several RNA helices of the 16S rRNA. Its function is as follows. Forms an intersubunit bridge (bridge B4) with the 23S rRNA of the 50S subunit in the ribosome. The protein is Small ribosomal subunit protein uS15 of Dinoroseobacter shibae (strain DSM 16493 / NCIMB 14021 / DFL 12).